A 160-amino-acid chain; its full sequence is Major allergen Pru av 1 (160 aa).

This sequence belongs to the BetVI family.

This is Major allergen Pru av 1 (PRUA1) from Prunus avium (Cherry).